The primary structure comprises 582 residues: DnaJ protein ERDJ3A (582 aa).

The signal sequence occupies residues 1–25 (MGIPVRSLLVASIVLSSIALHVAAA). The J domain occupies 29 to 93 (DPYKVLGVDK…EKRKNYDLYG (65 aa)). An N-linked (GlcNAc...) asparagine glycan is attached at N61. The interval 178 to 201 (GGSQHTGSAGKARRGTKSSGHDSS) is disordered. Residues 407-437 (VKDLRSGIKELKNLLENFEKKNKKLASNQAK) adopt a coiled-coil conformation.

In terms of assembly, interacts with BIP5.

The protein resides in the endoplasmic reticulum. Its subcellular location is the vacuole. Its function is as follows. May play a role in protein folding in the endoplasmic reticulum. The polypeptide is DnaJ protein ERDJ3A (Oryza sativa subsp. japonica (Rice)).